Consider the following 204-residue polypeptide: Leucyl/phenylalanyl-tRNA--protein transferase (204 aa).

The protein belongs to the L/F-transferase family.

It localises to the cytoplasm. The catalysed reaction is N-terminal L-lysyl-[protein] + L-leucyl-tRNA(Leu) = N-terminal L-leucyl-L-lysyl-[protein] + tRNA(Leu) + H(+). It catalyses the reaction N-terminal L-arginyl-[protein] + L-leucyl-tRNA(Leu) = N-terminal L-leucyl-L-arginyl-[protein] + tRNA(Leu) + H(+). It carries out the reaction L-phenylalanyl-tRNA(Phe) + an N-terminal L-alpha-aminoacyl-[protein] = an N-terminal L-phenylalanyl-L-alpha-aminoacyl-[protein] + tRNA(Phe). Functionally, functions in the N-end rule pathway of protein degradation where it conjugates Leu, Phe and, less efficiently, Met from aminoacyl-tRNAs to the N-termini of proteins containing an N-terminal arginine or lysine. This chain is Leucyl/phenylalanyl-tRNA--protein transferase, found in Rhizobium etli (strain CIAT 652).